The chain runs to 290 residues: ADP-dependent (S)-NAD(P)H-hydrate dehydratase (290 aa).

Positions 5–278 (NQTLLEKVII…RYLPKIMKII (274 aa)) constitute a YjeF C-terminal domain. (6S)-NADPHX-binding residues include A40, G103, and H152. G218 serves as a coordination point for AMP. D219 contacts (6S)-NADPHX.

The protein belongs to the NnrD/CARKD family. Homotetramer. The cofactor is Mg(2+).

It carries out the reaction (6S)-NADHX + ADP = AMP + phosphate + NADH + H(+). The catalysed reaction is (6S)-NADPHX + ADP = AMP + phosphate + NADPH + H(+). In terms of biological role, catalyzes the dehydration of the S-form of NAD(P)HX at the expense of ADP, which is converted to AMP. Together with NAD(P)HX epimerase, which catalyzes the epimerization of the S- and R-forms, the enzyme allows the repair of both epimers of NAD(P)HX, a damaged form of NAD(P)H that is a result of enzymatic or heat-dependent hydration. This Streptococcus pneumoniae (strain ATCC BAA-255 / R6) protein is ADP-dependent (S)-NAD(P)H-hydrate dehydratase.